Here is a 599-residue protein sequence, read N- to C-terminus: uncharacterized protein (599 aa).

Positions 1-13 (MSSSSSHNSFSGS) are enriched in low complexity. 2 disordered regions span residues 1 to 27 (MSSS…IDGL) and 41 to 86 (YPSN…DDTN). Residues 14 to 27 (KTNAAEGQNSIDGL) are compositionally biased toward polar residues. Over residues 44–70 (NEEKEVKETDIVPDENKVNELDVHKQS) the composition is skewed to basic and acidic residues. The next 14 membrane-spanning stretches (helical) occupy residues 97 to 117 (IVVP…TIVT), 135 to 155 (WIGS…GVFC), 162 to 182 (IVLY…GASQ), 192 to 212 (AIQG…ISDI), 223 to 243 (GILA…GGAI), 251 to 271 (WIFF…VVFL), 290 to 310 (FIGL…ISLG), 321 to 341 (ILCY…YDTF), 359 to 379 (AALL…AYYV), 396 to 416 (VHTI…GMVL), 423 to 443 (LPLI…MICV), 452 to 472 (VMGL…PPLI), 489 to 509 (TLMF…EVIF), and 552 to 572 (VIWI…FFIK).

The protein belongs to the major facilitator superfamily. TCR/Tet family.

The protein localises to the membrane. This is an uncharacterized protein from Schizosaccharomyces pombe (strain 972 / ATCC 24843) (Fission yeast).